The chain runs to 369 residues: CCA-adding enzyme (369 aa).

2 residues coordinate ATP: G8 and R11. Positions 8 and 11 each coordinate CTP. Mg(2+)-binding residues include D21 and D23. R91, R137, and R140 together coordinate ATP. Residues R91, R137, and R140 each coordinate CTP.

The protein belongs to the tRNA nucleotidyltransferase/poly(A) polymerase family. Bacterial CCA-adding enzyme type 2 subfamily. It depends on Mg(2+) as a cofactor.

The enzyme catalyses a tRNA precursor + 2 CTP + ATP = a tRNA with a 3' CCA end + 3 diphosphate. It carries out the reaction a tRNA with a 3' CCA end + 2 CTP + ATP = a tRNA with a 3' CCACCA end + 3 diphosphate. Functionally, catalyzes the addition and repair of the essential 3'-terminal CCA sequence in tRNAs without using a nucleic acid template. Adds these three nucleotides in the order of C, C, and A to the tRNA nucleotide-73, using CTP and ATP as substrates and producing inorganic pyrophosphate. tRNA 3'-terminal CCA addition is required both for tRNA processing and repair. Also involved in tRNA surveillance by mediating tandem CCA addition to generate a CCACCA at the 3' terminus of unstable tRNAs. While stable tRNAs receive only 3'-terminal CCA, unstable tRNAs are marked with CCACCA and rapidly degraded. This chain is CCA-adding enzyme, found in Francisella tularensis subsp. novicida (strain U112).